A 1051-amino-acid chain; its full sequence is DNA-directed RNA polymerase subunit beta (1051 aa).

The protein belongs to the RNA polymerase beta chain family. As to quaternary structure, in plastids the minimal PEP RNA polymerase catalytic core is composed of four subunits: alpha, beta, beta', and beta''. When a (nuclear-encoded) sigma factor is associated with the core the holoenzyme is formed, which can initiate transcription (Potential).

It localises to the plastid. The protein localises to the apicoplast. It carries out the reaction RNA(n) + a ribonucleoside 5'-triphosphate = RNA(n+1) + diphosphate. In terms of biological role, DNA-dependent RNA polymerase catalyzes the transcription of DNA into RNA using the four ribonucleoside triphosphates as substrates. The protein is DNA-directed RNA polymerase subunit beta (rpoB) of Toxoplasma gondii.